Reading from the N-terminus, the 188-residue chain is Mitochondrial import inner membrane translocase subunit TIM23-2 (188 aa).

4 helical membrane-spanning segments follow: residues 64-84, 112-131, 138-154, and 161-178; these read TGTA…ITGV, GNRI…GIVA, VWTS…VCRA, and AAVA…VVAG.

The protein belongs to the Tim17/Tim22/Tim23 family. In terms of assembly, homomultimer. Component of the TIM17:23 complex at least composed of TIM23, TIM17 and TIM50. The complex interacts with the TIM44 component of the PAM complex. Also part of the NADH-ubiquinone oxidoreductase complex I. Interacts with OEP163, TIM17-2, TIM21, TIM50 and MPPA2. As to expression, expressed in roots and young cotyledons. Detected in leaves and flowers.

Its subcellular location is the mitochondrion inner membrane. Functionally, essential component of the TIM17:23 complex, a complex that mediates the translocation of transit peptide-containing proteins across the mitochondrial inner membrane. Links the inner and outer membranes. This is Mitochondrial import inner membrane translocase subunit TIM23-2 (TIM23-2) from Arabidopsis thaliana (Mouse-ear cress).